The primary structure comprises 801 residues: MARLFSLKPLVLALGFCFGTHCAADTVAAEEADGRVAEGGAQGASESAQASDLTLGSTCLFCSNESGSPERTEAAVQGSGEASVPEDYTRIVADRMEGQSKVKVRAEGSVIIERDGAVLNTDWADYDQSGDTVTVGDRFALQQDGTLIRGETLTYNLDQQTGEAHNVRMETEQGGRRLQSVSRTAEMLGEGRYKLTETQFNTCSAGDAGWYVKAASVEADRGKGIGVAKHAAFVFGGVPLFYTPWADFPLDGNRKSGLLVPSVSAGSDGVSLSVPYYFNLAPNFDATFAPGIIGERGATFDGQIRYLRPDYSGQTDLTWLPHDKKSGRNNRYQAKWQHRHDISDTLQAGVDFNQVSDSGYYRDFYGGEEIAGNVNLNRRVWLDYGGRAAGGSLNAGLSVQKYQTLANQSGYKDEPYAIMPRLSADWHKNAGRAQIGVSAQFTRFSHDGRQDGSRLVVYPGIKWDFSNSWGYVRPKLGLHATYYSLDSFGGKASRSVGRVLPVVNIDGGTTFERNTRLFGGGVVQTIEPRLFYNYIPAKSQNDLPNFDSSESSFGYGQLFRENLYYGNDRINAANSLSTAVQSRILDGATGEERFRAGIGQKFYFKDDAVMLDGSVGKNPRSRSDWVAFASGGIGGRFTLDSSIHYNQNDKRAEHYAVGAGYRPAPGKVLNARYKYGRNEKIYLQADGSYFYDKLSQLDLSAQWPLTRNLSAVVRYNYGFEAKKPIEMLAGAEYKSSCGCWGAGVYAQRYVTGENTYKNAVFFSLQLKDLSSVGRNPAGRMDVAVPGYIPAHSLSAGRNKRP.

Positions 1–23 (MARLFSLKPLVLALGFCFGTHCA) are cleaved as a signal peptide.

This sequence belongs to the LptD family. As to quaternary structure, component of the lipopolysaccharide transport and assembly complex. Interacts with LptE and LptA.

The protein resides in the cell outer membrane. Together with LptE, is involved in the assembly of lipopolysaccharide (LPS) at the surface of the outer membrane. The protein is LPS-assembly protein LptD of Neisseria gonorrhoeae (strain ATCC 700825 / FA 1090).